We begin with the raw amino-acid sequence, 890 residues long: ATP-dependent DNA helicase DDX11 (890 aa).

Residues 4 to 424 enclose the Helicase ATP-binding domain; sequence KSGRFPFPFQ…KNLMYIKQIL (421 aa). Position 39-46 (39-46) interacts with ATP; sequence SPTGTGKS. A compositionally biased stretch (basic and acidic residues) spans 71–85; the sequence is LLEGQKDSDVVKEKN. Disordered stretches follow at residues 71 to 95 and 176 to 199; these read LLEGQKDSDVVKEKNSNSGPPEPDW and EYESDDEATPKSRLCDDDNDDDDD. [4Fe-4S] cluster-binding residues include Cys-246, Cys-264, Cys-294, and Cys-329. Positions 372–375 match the DEAH box motif; sequence DEAH.

This sequence belongs to the DEAD box helicase family. DEAH subfamily. DDX11/CHL1 sub-subfamily. It depends on [4Fe-4S] cluster as a cofactor.

The protein localises to the nucleus. Its subcellular location is the nucleolus. It localises to the cytoplasm. It is found in the cytoskeleton. The protein resides in the spindle pole. The protein localises to the midbody. Its subcellular location is the microtubule organizing center. It localises to the centrosome. It carries out the reaction Couples ATP hydrolysis with the unwinding of duplex DNA at the replication fork by translocating in the 5'-3' direction. This creates two antiparallel DNA single strands (ssDNA). The leading ssDNA polymer is the template for DNA polymerase III holoenzyme which synthesizes a continuous strand.. It catalyses the reaction ATP + H2O = ADP + phosphate + H(+). DNA-dependent ATPase and ATP-dependent DNA helicase that participates in various functions in genomic stability, including DNA replication, DNA repair and heterochromatin organization as well as in ribosomal RNA synthesis. Plays a role in DNA double-strand break (DSB) repair at the DNA replication fork during DNA replication recovery from DNA damage. Plays a role in the regulation of sister chromatid cohesion and mitotic chromosome segregation. Stimulates 5'-single-stranded DNA flap endonuclease activity of FEN1 in an ATP- and helicase-independent manner. Also plays a role in heterochromatin organization. Involved in rRNA transcription activation through binding to active hypomethylated rDNA gene loci by recruiting UBTF and the RNA polymerase Pol I transcriptional machinery. Plays a role in embryonic development. Associates with chromatin at DNA replication fork regions. Binds to single- and double-stranded DNAs. In Danio rerio (Zebrafish), this protein is ATP-dependent DNA helicase DDX11.